The sequence spans 421 residues: Adenylosuccinate synthetase (421 aa).

Residues 11–17 and 39–41 contribute to the GTP site; these read GDEGKGK and GHT. Aspartate 12 serves as the catalytic Proton acceptor. The Mg(2+) site is built by aspartate 12 and glycine 39. Residues 12 to 15, 37 to 40, threonine 129, arginine 143, asparagine 219, threonine 234, and arginine 298 each bind IMP; these read DEGK and NAGH. The Proton donor role is filled by histidine 40. Position 294 to 300 (294 to 300) interacts with substrate; sequence VTTGRRR. Residues arginine 300, 326 to 328, and 409 to 411 each bind GTP; these read KLD and GTG.

Belongs to the adenylosuccinate synthetase family. As to quaternary structure, homodimer. Requires Mg(2+) as cofactor.

It is found in the cytoplasm. It catalyses the reaction IMP + L-aspartate + GTP = N(6)-(1,2-dicarboxyethyl)-AMP + GDP + phosphate + 2 H(+). It functions in the pathway purine metabolism; AMP biosynthesis via de novo pathway; AMP from IMP: step 1/2. Plays an important role in the de novo pathway and in the salvage pathway of purine nucleotide biosynthesis. Catalyzes the first committed step in the biosynthesis of AMP from IMP. The sequence is that of Adenylosuccinate synthetase from Paracoccidioides lutzii (strain ATCC MYA-826 / Pb01) (Paracoccidioides brasiliensis).